A 1256-amino-acid chain; its full sequence is N-acetylglucosamine-1-phosphotransferase subunits alpha/beta (1256 aa).

A helical membrane pass occupies residues Val22–Leu42. 5 N-linked (GlcNAc...) asparagine glycosylation sites follow: Asn83, Asn114, Asn148, Asn179, and Asn250. 4 cysteine pairs are disulfide-bonded: Cys438-Cys461, Cys452-Cys468, Cys505-Cys528, and Cys519-Cys535. LNR repeat units follow at residues Cys438–Gly473 and Cys505–Lys545. Ca(2+) contacts are provided by Asp449, Asp464, Asp467, Asp516, Asp531, and Asp534. N-linked (GlcNAc...) asparagine glycans are attached at residues Asn614, Asn699, Asn729, Asn829, and Asn1009. Residues Asn699–Asn798 form the DMAP1-binding domain. The 36-residue stretch at Val1005–Leu1040 folds into the EF-hand domain. 4 residues coordinate Ca(2+): Asp1018, Asp1020, Ser1022, and Glu1029. Residue Asn1129 is glycosylated (N-linked (GlcNAc...) asparagine). Residues Val1215–Leu1235 form a helical membrane-spanning segment.

It belongs to the stealth family. In terms of assembly, hexamer of two alpha, two beta and two gamma (GNPTG) subunits; disulfide-linked. The alpha and/or the beta subunits of the enzyme constitute the catalytic subunits. Interacts with LYSET; facilitates proper localization of GNPTAB. The alpha- and beta-subunits are generated by a proteolytic cleavage by MBTPS1 protease at the Lys-928-Asp-929 bond. Expressed in the heart, whole brain, placenta, lung, liver, skeletal muscle, kidney and pancreas.

The protein resides in the golgi apparatus membrane. The enzyme catalyses N(4)-[alpha-D-mannosyl-(1-&gt;2)-alpha-D-mannosyl-(glycan)]-L-asparaginyl-[protein] + UDP-N-acetyl-alpha-D-glucosamine = N(4)-[6-(N-acetyl-alpha-D-glucosaminyl-1-phospho)-alpha-D-mannosyl-(1-&gt;2)-alpha-D-mannosyl-(glycan)]-L-asparaginyl-[protein] + UMP + H(+). In terms of biological role, catalyzes the formation of mannose 6-phosphate (M6P) markers on high mannose type oligosaccharides in the Golgi apparatus. M6P residues are required to bind to the M6P receptors (MPR), which mediate the vesicular transport of lysosomal enzymes to the endosomal/prelysosomal compartment. This Homo sapiens (Human) protein is N-acetylglucosamine-1-phosphotransferase subunits alpha/beta (GNPTAB).